The sequence spans 254 residues: Translation initiation factor 2 subunit alpha (254 aa).

The region spanning 10–81 (GDLVVVKITE…ERKVVDLSLK (72 aa)) is the S1 motif domain.

It belongs to the eIF-2-alpha family. As to quaternary structure, heterotrimer composed of an alpha, a beta and a gamma chain.

Its function is as follows. eIF-2 functions in the early steps of protein synthesis by forming a ternary complex with GTP and initiator tRNA. The chain is Translation initiation factor 2 subunit alpha from Thermoplasma acidophilum (strain ATCC 25905 / DSM 1728 / JCM 9062 / NBRC 15155 / AMRC-C165).